Consider the following 166-residue polypeptide: Photosystem I assembly protein Ycf3 (166 aa).

3 TPR repeats span residues 35-68, 72-105, and 120-153; these read AFVY…EVDP, SFIF…NPSL, and GEQA…APLN.

The protein belongs to the Ycf3 family.

It is found in the plastid. It localises to the chloroplast thylakoid membrane. In terms of biological role, essential for the assembly of the photosystem I (PSI) complex. May act as a chaperone-like factor to guide the assembly of the PSI subunits. This chain is Photosystem I assembly protein Ycf3, found in Ostreococcus tauri.